The following is a 408-amino-acid chain: Histidine--tRNA ligase (408 aa).

Belongs to the class-II aminoacyl-tRNA synthetase family. Homodimer.

It localises to the cytoplasm. The catalysed reaction is tRNA(His) + L-histidine + ATP = L-histidyl-tRNA(His) + AMP + diphosphate + H(+). This chain is Histidine--tRNA ligase, found in Campylobacter concisus (strain 13826).